A 543-amino-acid chain; its full sequence is NADH-ubiquinone oxidoreductase chain 4 (543 aa).

The next 14 membrane-spanning stretches (helical) occupy residues 5–25 (FLMFLFALLIIPIIGIFIIWS), 84–104 (VVAFIISILNLMVSLLVYILF), 129–149 (VDGISIYFVLLTTIIIPIALM), 161–181 (SYLIIMLLLETLLLAVFLVLD), 182–202 (ILLFYIFFESILPPLFILIGL), 213–233 (FYIFLYTLLGSLFLLLSILTM), 254–274 (IQIFLFCGIFIAFAVKTPTIF), 287–307 (PLGGSIVLAGIVLKLSLYGIF), 321–341 (YTYIIFVIGVITIIYASFSTL), 350–370 (IAYSSVSHAAVYLIGVFSNTI), 377–397 (ILLGLAHGFTSPALFFIVGGV), 416–436 (MAPLLSLLFFIFSLANCGVPL), 456–476 (LLGLLASSSIVFSAAYSIFLF), and 501–521 (FYALIFLGVLVVFLGIYPSII).

Belongs to the complex I subunit 4 family.

The protein localises to the mitochondrion membrane. It catalyses the reaction a ubiquinone + NADH + 5 H(+)(in) = a ubiquinol + NAD(+) + 4 H(+)(out). In terms of biological role, core subunit of the mitochondrial membrane respiratory chain NADH dehydrogenase (Complex I) that is believed to belong to the minimal assembly required for catalysis. Complex I functions in the transfer of electrons from NADH to the respiratory chain. The immediate electron acceptor for the enzyme is believed to be ubiquinone. The protein is NADH-ubiquinone oxidoreductase chain 4 (ndh-4) of Neurospora crassa (strain ATCC 24698 / 74-OR23-1A / CBS 708.71 / DSM 1257 / FGSC 987).